A 231-amino-acid chain; its full sequence is Orotidine 5'-phosphate decarboxylase (231 aa).

Substrate-binding positions include Asp11, Lys33, 60 to 69 (DLKFHDIPNT), Thr120, Arg181, Gln190, Gly210, and Arg211. The active-site Proton donor is Lys62.

The protein belongs to the OMP decarboxylase family. Type 1 subfamily. Homodimer.

It catalyses the reaction orotidine 5'-phosphate + H(+) = UMP + CO2. It functions in the pathway pyrimidine metabolism; UMP biosynthesis via de novo pathway; UMP from orotate: step 2/2. Functionally, catalyzes the decarboxylation of orotidine 5'-monophosphate (OMP) to uridine 5'-monophosphate (UMP). This chain is Orotidine 5'-phosphate decarboxylase, found in Vibrio cholerae serotype O1 (strain ATCC 39315 / El Tor Inaba N16961).